We begin with the raw amino-acid sequence, 311 residues long: Ribonuclease Z (311 aa).

Residues His-61, His-63, Asp-65, His-66, His-139, Asp-210, and His-268 each coordinate Zn(2+). Asp-65 (proton acceptor) is an active-site residue.

This sequence belongs to the RNase Z family. Homodimer. It depends on Zn(2+) as a cofactor.

It carries out the reaction Endonucleolytic cleavage of RNA, removing extra 3' nucleotides from tRNA precursor, generating 3' termini of tRNAs. A 3'-hydroxy group is left at the tRNA terminus and a 5'-phosphoryl group is left at the trailer molecule.. Zinc phosphodiesterase, which displays some tRNA 3'-processing endonuclease activity. Probably involved in tRNA maturation, by removing a 3'-trailer from precursor tRNA. The sequence is that of Ribonuclease Z from Haloarcula marismortui (strain ATCC 43049 / DSM 3752 / JCM 8966 / VKM B-1809) (Halobacterium marismortui).